Here is a 450-residue protein sequence, read N- to C-terminus: tRNA modification GTPase MnmE (450 aa).

Residues R25, E83, and K122 each contribute to the (6S)-5-formyl-5,6,7,8-tetrahydrofolate site. The region spanning 218 to 377 (GFKVAIIGKP…QMEALLDSIG (160 aa)) is the TrmE-type G domain. N228 is a binding site for K(+). Residues 228-233 (NVGKSS), 247-253 (SDIAGTT), and 272-275 (DTAG) contribute to the GTP site. Residue S232 participates in Mg(2+) binding. Positions 247, 249, and 252 each coordinate K(+). T253 provides a ligand contact to Mg(2+). K450 is a binding site for (6S)-5-formyl-5,6,7,8-tetrahydrofolate.

This sequence belongs to the TRAFAC class TrmE-Era-EngA-EngB-Septin-like GTPase superfamily. TrmE GTPase family. In terms of assembly, homodimer. Heterotetramer of two MnmE and two MnmG subunits. Requires K(+) as cofactor.

Its subcellular location is the cytoplasm. In terms of biological role, exhibits a very high intrinsic GTPase hydrolysis rate. Involved in the addition of a carboxymethylaminomethyl (cmnm) group at the wobble position (U34) of certain tRNAs, forming tRNA-cmnm(5)s(2)U34. The protein is tRNA modification GTPase MnmE of Sulfurovum sp. (strain NBC37-1).